Reading from the N-terminus, the 189-residue chain is Elongation factor P (189 aa).

K34 carries the post-translational modification N6-(3,6-diaminohexanoyl)-5-hydroxylysine.

Belongs to the elongation factor P family. May be beta-lysylated on the epsilon-amino group of Lys-34 by the combined action of EpmA and EpmB, and then hydroxylated on the C5 position of the same residue by EpmC (if this protein is present). Lysylation is critical for the stimulatory effect of EF-P on peptide-bond formation. The lysylation moiety may extend toward the peptidyltransferase center and stabilize the terminal 3-CCA end of the tRNA. Hydroxylation of the C5 position on Lys-34 may allow additional potential stabilizing hydrogen-bond interactions with the P-tRNA.

Its subcellular location is the cytoplasm. It functions in the pathway protein biosynthesis; polypeptide chain elongation. Functionally, involved in peptide bond synthesis. Alleviates ribosome stalling that occurs when 3 or more consecutive Pro residues or the sequence PPG is present in a protein, possibly by augmenting the peptidyl transferase activity of the ribosome. Modification of Lys-34 is required for alleviation. The chain is Elongation factor P from Idiomarina loihiensis (strain ATCC BAA-735 / DSM 15497 / L2-TR).